The chain runs to 214 residues: GTP-binding nuclear protein GSP1/Ran (214 aa).

The Small GTPase Ran-type domain maps to 4 to 168; it reads EVPTFKLVLV…LWLARKLAGN (165 aa). A GTP-binding site is contributed by 15 to 22; that stretch reads DGGTGKTT. The tract at residues 34–42 is switch-I; the sequence is KKYIATIGV. Residues Gly65, 119–122, and 147–149 contribute to the GTP site; these read NKVD and SAK. Residues 65–81 form a switch-II region; sequence GQEKFGGLRDGYYINAQ.

It belongs to the small GTPase superfamily. Ran family. In terms of assembly, found in a nuclear export complex with RanGTP, exportin and pre-miRNA.

It localises to the nucleus. Functionally, GTP-binding protein involved in nucleocytoplasmic transport. Required for the import of protein into the nucleus and also for RNA export. Involved in chromatin condensation and control of cell cycle. This Eremothecium gossypii (strain ATCC 10895 / CBS 109.51 / FGSC 9923 / NRRL Y-1056) (Yeast) protein is GTP-binding nuclear protein GSP1/Ran (GSP1).